The chain runs to 298 residues: Acetyl-coenzyme A carboxylase carboxyl transferase subunit beta 1 (298 aa).

The CoA carboxyltransferase N-terminal domain occupies 26–294 (MWVKCPSCGD…RAADVQNAPA (269 aa)). Positions 30, 33, 49, and 51 each coordinate Zn(2+). The segment at 30–51 (CPSCGDLIYTRQFSDNLKVCKC) adopts a C4-type zinc-finger fold.

It belongs to the AccD/PCCB family. In terms of assembly, acetyl-CoA carboxylase is a heterohexamer composed of biotin carboxyl carrier protein (AccB), biotin carboxylase (AccC) and two subunits each of ACCase subunit alpha (AccA) and ACCase subunit beta (AccD). Requires Zn(2+) as cofactor.

The protein localises to the cytoplasm. The catalysed reaction is N(6)-carboxybiotinyl-L-lysyl-[protein] + acetyl-CoA = N(6)-biotinyl-L-lysyl-[protein] + malonyl-CoA. Its pathway is lipid metabolism; malonyl-CoA biosynthesis; malonyl-CoA from acetyl-CoA: step 1/1. Component of the acetyl coenzyme A carboxylase (ACC) complex. Biotin carboxylase (BC) catalyzes the carboxylation of biotin on its carrier protein (BCCP) and then the CO(2) group is transferred by the transcarboxylase to acetyl-CoA to form malonyl-CoA. This chain is Acetyl-coenzyme A carboxylase carboxyl transferase subunit beta 1, found in Roseiflexus castenholzii (strain DSM 13941 / HLO8).